A 294-amino-acid chain; its full sequence is 4-hydroxy-tetrahydrodipicolinate synthase (294 aa).

A pyruvate-binding site is contributed by T45. Y133 (proton donor/acceptor) is an active-site residue. K161 serves as the catalytic Schiff-base intermediate with substrate. I203 provides a ligand contact to pyruvate.

It belongs to the DapA family. In terms of assembly, homotetramer; dimer of dimers.

The protein resides in the cytoplasm. The enzyme catalyses L-aspartate 4-semialdehyde + pyruvate = (2S,4S)-4-hydroxy-2,3,4,5-tetrahydrodipicolinate + H2O + H(+). It functions in the pathway amino-acid biosynthesis; L-lysine biosynthesis via DAP pathway; (S)-tetrahydrodipicolinate from L-aspartate: step 3/4. In terms of biological role, catalyzes the condensation of (S)-aspartate-beta-semialdehyde [(S)-ASA] and pyruvate to 4-hydroxy-tetrahydrodipicolinate (HTPA). This is 4-hydroxy-tetrahydrodipicolinate synthase from Buchnera aphidicola subsp. Baizongia pistaciae (strain Bp).